Here is a 1487-residue protein sequence, read N- to C-terminus: Collagen alpha-1(II) chain (1487 aa).

Residues 1 to 25 (MIRLGAPQTLVLLTLLVAAVLRCHG) form the signal peptide. The propeptide at 26–181 (QDVQKAGSCV…PPGLGGNFAA (156 aa)) is N-terminal propeptide. The 59-residue stretch at 32-90 (GSCVQDGQRYNDKDVWKPEPCRICVCDTGTVLCDDIICEDMKDCLSPETPFGECCPICS) folds into the VWFC domain. The interval 96–1234 (ASGQPGPKGQ…GLGQREKGPD (1139 aa)) is disordered. 2 stretches are compositionally biased toward basic and acidic residues: residues 105 to 116 (QKGEPGDIKDIV) and 133 to 154 (PRGD…RDGE). Over residues 158–173 (PGNPGPPGPPGPPGPP) the composition is skewed to pro residues. K190 carries the 5-hydroxylysine modification. A glycan (O-linked (Gal...) hydroxylysine) is linked at K190. Residues 192-203 (GGAQMGVMQGPM) are compositionally biased toward low complexity. The tract at residues 201–1214 (GPMGPMGPRG…PGPPGPPGPP (1014 aa)) is triple-helical region. The span at 208-217 (PRGPPGPAGA) shows a compositional bias: pro residues. A hydroxyproline mark is found at P212, P218, P230, P233, P245, P248, P251, P260, P269, P278, P281, and P284. Over residues 218 to 239 (PGPQGFQGNPGEPGEPGVSGPM) the composition is skewed to low complexity. The segment covering 241 to 250 (PRGPPGPPGK) has biased composition (pro residues). The segment covering 251-265 (PGDDGEAGKPGKSGE) has biased composition (basic and acidic residues). K287 is subject to 5-hydroxylysine. Residue K287 is glycosylated (O-linked (Gal...) hydroxylysine). A Hydroxyproline modification is found at P293. K299 bears the 5-hydroxylysine mark. O-linked (Gal...) hydroxylysine glycosylation is present at K299. Hydroxyproline is present on P305. K308 carries the post-translational modification 5-hydroxylysine. K308 carries O-linked (Gal...) hydroxylysine glycosylation. The segment covering 310-320 (ESGSPGENGSP) has biased composition (low complexity). Hydroxyproline occurs at positions 314, 320, 329, 350, 356, 365, 368, and 371. The span at 335-350 (TGPAGAAGARGNDGQP) shows a compositional bias: low complexity. Over residues 360-369 (GPAGGPGFPG) the composition is skewed to gly residues. Low complexity-rich tracts occupy residues 370 to 382 (APGA…PTGA) and 391 to 431 (PRGE…AGAP). K374 bears the 5-hydroxylysine mark. O-linked (Gal...) hydroxylysine glycosylation is present at K374. Hydroxyproline occurs at positions 395, 398, 401, 410, and 416. At K419 the chain carries 5-hydroxylysine. 4 positions are modified to hydroxyproline: P425, P431, P434, and P440. The span at 433–442 (FPGPRGPPGP) shows a compositional bias: pro residues. 5-hydroxylysine is present on K452. Position 458 is a hydroxyproline (P458). K464 and K470 each carry 5-hydroxylysine. P473, P482, P497, P506, P512, and P518 each carry hydroxyproline. K527 carries the post-translational modification 5-hydroxylysine. At P530 the chain carries Hydroxyproline. The residue at position 542 (K542) is a 5-hydroxylysine. 8 positions are modified to hydroxyproline: P551, P557, P566, P581, P587, P590, P599, and P605. K608 is modified (5-hydroxylysine). O-linked (Gal...) hydroxylysine glycosylation occurs at K608. At P614 the chain carries Hydroxyproline. K620 carries the post-translational modification 5-hydroxylysine. An O-linked (Gal...) hydroxylysine glycan is attached at K620. The segment covering 622-631 (LPGAPGLRGL) has biased composition (low complexity). Hydroxyproline is present on residues P623, P626, P632, P644, P659, and P668. Positions 656 to 667 (QGAPGPSGFQGL) are enriched in low complexity. At P670 the chain carries 3-hydroxyproline. A hydroxyproline mark is found at P671 and P674. Over residues 721–736 (LPGTPGTDGPKGAAGP) the composition is skewed to low complexity. Basic and acidic residues predominate over residues 764–775 (KGDRGDVGEKGP). 2 stretches are compositionally biased toward low complexity: residues 833-848 (AGFA…PGAK) and 877-913 (PTGV…SNGN). P907 is subject to 3-hydroxyproline. A 4-hydroxyproline mark is found at P908, P914, and P920. Residues 1069–1079 (APGPPGSPGPA) show a composition bias toward pro residues. Residues 1091-1109 (AGAQGPMGPAGPAGARGMP) are compositionally biased toward low complexity. Over residues 1115 to 1129 (RGDKGETGEAGERGL) the composition is skewed to basic and acidic residues. K1130 is subject to 5-hydroxylysine. Residue K1130 is glycosylated (O-linked (Gal...) hydroxylysine). A 3-hydroxyproline modification is found at P1144. Residues 1148–1157 (SGDQGASGPA) show a composition bias toward low complexity. Residue P1181 is modified to 4-hydroxyproline. Position 1186 is a 3-hydroxyproline (P1186). P1187 is modified (4-hydroxyproline). Residues 1199–1216 (AGPPGNPGPPGPPGPPGP) are compositionally biased toward pro residues. P1201 carries the 3-hydroxyproline modification. A 4-hydroxyproline mark is found at P1202 and P1205. P1207 is modified (3-hydroxyproline). P1208 and P1211 each carry 4-hydroxyproline. P1213 carries the post-translational modification 3-hydroxyproline. Position 1214 is a 4-hydroxyproline (P1214). Positions 1215 to 1241 (GPGIDMSAFAGLGQREKGPDPLQYMRA) are nonhelical region (C-terminal). The Fibrillar collagen NC1 domain maps to 1253–1487 (AEVDATLKSL…GVDIGPVCFL (235 aa)). 3 disulfides stabilise this stretch: C1283/C1315, C1323/C1485, and C1393/C1438. Ca(2+) is bound by residues D1301, N1303, Q1304, C1306, and D1309. An N-linked (GlcNAc...) asparagine glycan is attached at N1388.

The protein belongs to the fibrillar collagen family. Homotrimers of alpha 1(II) chains. Post-translationally, probably 3-hydroxylated on prolines by LEPREL1. Proline residues at the third position of the tripeptide repeating unit (G-X-P) are hydroxylated in some or all of the chains. Proline residues at the second position of the tripeptide repeating unit (G-P-X) are hydroxylated in some of the chains. In terms of processing, O-linked glycans consist of Glc-Gal disaccharides bound to the oxygen atom of post-translationally added hydroxyl groups. Contains mostly 4-hydroxyproline. Prolines at the third position of the tripeptide repeating unit (G-X-P) are 4-hydroxylated in some or all of the chains. Post-translationally, contains 3-hydroxyproline at a few sites. This modification occurs on the first proline residue in the sequence motif Gly-Pro-Hyp, where Hyp is 4-hydroxyproline. In terms of processing, lysine residues at the third position of the tripeptide repeating unit (G-X-Y) are 5-hydroxylated in some or all of the chains. O-glycosylated on hydroxylated lysine residues. The O-linked glycan consists of a Glc-Gal disaccharide.

It localises to the secreted. The protein localises to the extracellular space. The protein resides in the extracellular matrix. Type II collagen is specific for cartilaginous tissues. It is essential for the normal embryonic development of the skeleton, for linear growth and for the ability of cartilage to resist compressive forces. This is Collagen alpha-1(II) chain from Bos taurus (Bovine).